We begin with the raw amino-acid sequence, 208 residues long: Small ribosomal subunit protein uS4 (208 aa).

In terms of domain architecture, S4 RNA-binding spans 98–168; it reads RRLDNVVFRL…DSLDTVVRRG (71 aa).

It belongs to the universal ribosomal protein uS4 family. Part of the 30S ribosomal subunit. Contacts protein S5. The interaction surface between S4 and S5 is involved in control of translational fidelity.

Its function is as follows. One of the primary rRNA binding proteins, it binds directly to 16S rRNA where it nucleates assembly of the body of the 30S subunit. Functionally, with S5 and S12 plays an important role in translational accuracy. The protein is Small ribosomal subunit protein uS4 of Desulforapulum autotrophicum (strain ATCC 43914 / DSM 3382 / VKM B-1955 / HRM2) (Desulfobacterium autotrophicum).